A 372-amino-acid polypeptide reads, in one-letter code: Methylthioribose-1-phosphate isomerase (372 aa).

D252 acts as the Proton donor in catalysis.

It belongs to the eIF-2B alpha/beta/delta subunits family. MtnA subfamily.

The protein resides in the cytoplasm. The protein localises to the nucleus. The enzyme catalyses 5-(methylsulfanyl)-alpha-D-ribose 1-phosphate = 5-(methylsulfanyl)-D-ribulose 1-phosphate. The protein operates within amino-acid biosynthesis; L-methionine biosynthesis via salvage pathway; L-methionine from S-methyl-5-thio-alpha-D-ribose 1-phosphate: step 1/6. Functionally, catalyzes the interconversion of methylthioribose-1-phosphate (MTR-1-P) into methylthioribulose-1-phosphate (MTRu-1-P). In Yarrowia lipolytica (strain CLIB 122 / E 150) (Yeast), this protein is Methylthioribose-1-phosphate isomerase.